A 453-amino-acid polypeptide reads, in one-letter code: Bifunctional protein GlmU (453 aa).

The pyrophosphorylase stretch occupies residues Met1–Arg226. UDP-N-acetyl-alpha-D-glucosamine-binding positions include Leu8–Gly11, Lys22, Gln73, Gly78–Thr79, Tyr100–Asp102, Gly137, Glu151, Asn166, and Asn224. Asp102 lines the Mg(2+) pocket. Asn224 provides a ligand contact to Mg(2+). The segment at Ile227–Gln247 is linker. Positions Gly248–Lys453 are N-acetyltransferase. The UDP-N-acetyl-alpha-D-glucosamine site is built by Arg330 and Lys348. Catalysis depends on His360, which acts as the Proton acceptor. UDP-N-acetyl-alpha-D-glucosamine is bound by residues Tyr363 and Asn374. Acetyl-CoA-binding positions include Ala377, Asn383 to Tyr384, Ser402, Ala420, and Arg437.

The protein in the N-terminal section; belongs to the N-acetylglucosamine-1-phosphate uridyltransferase family. This sequence in the C-terminal section; belongs to the transferase hexapeptide repeat family. Homotrimer. Mg(2+) is required as a cofactor.

The protein localises to the cytoplasm. The catalysed reaction is alpha-D-glucosamine 1-phosphate + acetyl-CoA = N-acetyl-alpha-D-glucosamine 1-phosphate + CoA + H(+). It catalyses the reaction N-acetyl-alpha-D-glucosamine 1-phosphate + UTP + H(+) = UDP-N-acetyl-alpha-D-glucosamine + diphosphate. Its pathway is nucleotide-sugar biosynthesis; UDP-N-acetyl-alpha-D-glucosamine biosynthesis; N-acetyl-alpha-D-glucosamine 1-phosphate from alpha-D-glucosamine 6-phosphate (route II): step 2/2. It participates in nucleotide-sugar biosynthesis; UDP-N-acetyl-alpha-D-glucosamine biosynthesis; UDP-N-acetyl-alpha-D-glucosamine from N-acetyl-alpha-D-glucosamine 1-phosphate: step 1/1. The protein operates within bacterial outer membrane biogenesis; LPS lipid A biosynthesis. Catalyzes the last two sequential reactions in the de novo biosynthetic pathway for UDP-N-acetylglucosamine (UDP-GlcNAc). The C-terminal domain catalyzes the transfer of acetyl group from acetyl coenzyme A to glucosamine-1-phosphate (GlcN-1-P) to produce N-acetylglucosamine-1-phosphate (GlcNAc-1-P), which is converted into UDP-GlcNAc by the transfer of uridine 5-monophosphate (from uridine 5-triphosphate), a reaction catalyzed by the N-terminal domain. The polypeptide is Bifunctional protein GlmU (Vibrio cholerae serotype O1 (strain M66-2)).